The chain runs to 698 residues: Protein artemis (698 aa).

At T380 the chain carries Phosphothreonine. S385 carries the post-translational modification Phosphoserine. 3 disordered regions span residues 445–485 (ANFV…DPDV), 505–595 (LENL…DSIS), and 620–669 (NGVP…LPKP). A compositionally biased stretch (acidic residues) spans 449-461 (DCDESNSDSEGEL). Residues 508-521 (LPSSIETGGSQSPK) are compositionally biased toward polar residues. The segment covering 538 to 551 (THISSQNSSQSTHI) has biased composition (low complexity). Over residues 552-583 (TDQGSQGWDSQCDTVLLSSQEKSGGDSTSLNK) the composition is skewed to polar residues. Low complexity predominate over residues 641-655 (TSLTSTQADSQSSSD). Position 650 is a phosphoserine; by ATM (S650).

Belongs to the DNA repair metallo-beta-lactamase (DRMBL) family. As to quaternary structure, interacts with LIG4; the interaction is direct. Interacts with ATM. Interacts with BRCA1. Interacts with PRKDC. Interacts with TP53BP1. Also exhibits ATM- and phosphorylation-dependent interaction with the MRN complex, composed of MRE11, RAD50, and NBN. In terms of processing, phosphorylation on undefined residues by PRKDC may stimulate endonucleolytic activity on 5' and 3' hairpins and overhangs. PRKDC must remain present, even after phosphorylation, for efficient hairpin opening. Also phosphorylated by ATM in response to ionizing radiation (IR) and by ATR in response to ultraviolet (UV) radiation.

It is found in the nucleus. Required for V(D)J recombination, the process by which exons encoding the antigen-binding domains of immunoglobulins and T-cell receptor proteins are assembled from individual V, (D), and J gene segments. V(D)J recombination is initiated by the lymphoid specific RAG endonuclease complex, which generates site specific DNA double strand breaks (DSBs). These DSBs present two types of DNA end structures: hairpin sealed coding ends and phosphorylated blunt signal ends. These ends are independently repaired by the non homologous end joining (NHEJ) pathway to form coding and signal joints respectively. This protein exhibits single-strand specific 5'-3' exonuclease activity in isolation, and acquires endonucleolytic activity on 5' and 3' hairpins and overhangs when in a complex with PRKDC. The latter activity is required specifically for the resolution of closed hairpins prior to the formation of the coding joint. May also be required for the repair of complex DSBs induced by ionizing radiation, which require substantial end-processing prior to religation by NHEJ. This Rattus norvegicus (Rat) protein is Protein artemis (Dclre1c).